The chain runs to 581 residues: Chaperonin GroEL 1 (581 aa).

Residues 29-32, 86-90, G413, and D492 contribute to the ATP site; these read TIGP and DGTTT. The segment at 522–541 is disordered; it reads PEPEAAGPGGPGADPMGGMG. The span at 528-541 shows a compositional bias: gly residues; it reads GPGGPGADPMGGMG.

It belongs to the chaperonin (HSP60) family. In terms of assembly, forms a cylinder of 14 subunits composed of two heptameric rings stacked back-to-back. Interacts with the co-chaperonin GroES.

The protein localises to the cytoplasm. It carries out the reaction ATP + H2O + a folded polypeptide = ADP + phosphate + an unfolded polypeptide.. Together with its co-chaperonin GroES, plays an essential role in assisting protein folding. The GroEL-GroES system forms a nano-cage that allows encapsulation of the non-native substrate proteins and provides a physical environment optimized to promote and accelerate protein folding. The protein is Chaperonin GroEL 1 of Prochlorococcus marinus (strain MIT 9301).